A 230-amino-acid polypeptide reads, in one-letter code: RING finger protein 141 (230 aa).

A lipid anchor (N-myristoyl glycine) is attached at G2. The RING-type zinc finger occupies 155–192 (CCICMDGRADLILPCAHSFCQKCIDKWSDRHRNCPICR).

In terms of tissue distribution, isoform 1 is testis-specific. Isoform 2 is expressed in heart, brain, skeletal muscle, kidney, pancreas, lung, liver and testis. Isoform 3 is expressed in heart, liver, and kidney.

The protein resides in the membrane. May be involved in spermatogenesis. The protein is RING finger protein 141 (Rnf141) of Mus musculus (Mouse).